Here is a 119-residue protein sequence, read N- to C-terminus: UPF0102 protein MS1289 (119 aa).

Belongs to the UPF0102 family.

The protein is UPF0102 protein MS1289 of Mannheimia succiniciproducens (strain KCTC 0769BP / MBEL55E).